Reading from the N-terminus, the 147-residue chain is Transcription antitermination protein NusB (147 aa).

This sequence belongs to the NusB family.

Its function is as follows. Involved in transcription antitermination. Required for transcription of ribosomal RNA (rRNA) genes. Binds specifically to the boxA antiterminator sequence of the ribosomal RNA (rrn) operons. The sequence is that of Transcription antitermination protein NusB from Legionella pneumophila (strain Paris).